The chain runs to 731 residues: Ribonuclease R (731 aa).

Positions 260-589 constitute an RNB domain; it reads RTDLRHFPFF…LHRVIKYLLF (330 aa). The region spanning 647-728 is the S1 motif domain; the sequence is GCILNGVISN…NEKKIELSLY (82 aa).

This sequence belongs to the RNR ribonuclease family. RNase R subfamily. Monomer.

The protein resides in the cytoplasm. The enzyme catalyses Exonucleolytic cleavage in the 3'- to 5'-direction to yield nucleoside 5'-phosphates.. 3'-5' exoribonuclease that releases 5'-nucleoside monophosphates and is involved in maturation of structured RNAs. This is Ribonuclease R from Buchnera aphidicola subsp. Acyrthosiphon pisum (strain APS) (Acyrthosiphon pisum symbiotic bacterium).